The following is a 200-amino-acid chain: Protein C2-DOMAIN ABA-RELATED 5 (200 aa).

A C2 domain is found at 22–142 (VAGEKHKDRR…LKMHLHDLPS (121 aa)). Residues arginine 57, aspartate 58, aspartate 63, aspartate 109, tyrosine 110, aspartate 111, and aspartate 117 each coordinate Ca(2+).

It belongs to the plant CAR protein family. Binds to PYR/PYL/RCAR abscisic acid intracellular receptors in an ABA-independent manner, both at the plasma membrane and in the nucleus.

It is found in the cell membrane. The protein resides in the nucleus. In terms of biological role, stimulates the GTPase/ATPase activities of Obg-like ATPases. Mediates the transient calcium-dependent interaction of PYR/PYL/RCAR abscisic acid (ABA) receptors with the plasma membrane and thus regulates ABA sensitivity. The polypeptide is Protein C2-DOMAIN ABA-RELATED 5 (Arabidopsis thaliana (Mouse-ear cress)).